The chain runs to 206 residues: Ribosome maturation factor RimP (206 aa).

It belongs to the RimP family.

Its subcellular location is the cytoplasm. Functionally, required for maturation of 30S ribosomal subunits. This chain is Ribosome maturation factor RimP, found in Paracoccus denitrificans (strain Pd 1222).